Reading from the N-terminus, the 422-residue chain is MLSSLRRVVPSLPRGSRSLTSQQIFDREKKFGCHNYKPLPVALSKGEGCFVWDVEGKKYFDFLAAYSAVNQGHCHPKLLKVVQEQASTLTLTSRAFYNNVLGEYEEYVTKLFKYDKVLPMNTGVEACESAVKLARRWAYDVKGVKDNEAVVVFAENNFWGRSIAAISASTDPDSFARFGPFVPGFKTVPYNNLKAVEDAIKDKNVAAFMVEPIQGEAGVVLPDPGYLKGVSDLCKKYNVLFITDEVQSGLGRSGKLLAHYHDNVRPDIVVLGKALSGGFYPVSAVLCDDNVMMNIKPGEHGSTYGGNPLACKVAIAALEILQEEKLVENSAVMGDLLMSKLKTLPKDIVSTVRGKGLFCAIVINKKYDAWKVCLKLKENGLLAKNTHGDIIRFAPPLCINKEQVEQAADIIIKTVTDFAKQN.

Residue lysine 273 is modified to N6-(pyridoxal phosphate)lysine.

Belongs to the class-III pyridoxal-phosphate-dependent aminotransferase family. Pyridoxal 5'-phosphate serves as cofactor.

It localises to the mitochondrion matrix. It catalyses the reaction a 2-oxocarboxylate + L-ornithine = L-glutamate 5-semialdehyde + an L-alpha-amino acid. It functions in the pathway amino-acid biosynthesis; L-proline biosynthesis; L-glutamate 5-semialdehyde from L-ornithine: step 1/1. This is Probable ornithine aminotransferase, mitochondrial from Caenorhabditis elegans.